Reading from the N-terminus, the 124-residue chain is Kalata-B1 (124 aa).

The first 22 residues, 1–22, serve as a signal peptide directing secretion; that stretch reads MAKFTVCLLLCLLLAAFVGAFG. Residues 23 to 88 constitute a propeptide that is removed on maturation; it reads SELSDSHKTT…QVFLKQLQLK (66 aa). A cross-link (cyclopeptide (Gly-Asn)) is located at residues 89–117; the sequence is GLPVCGETCVGGTCNTPGCTCSWPVCTRN. Intrachain disulfides connect Cys93–Cys107, Cys97–Cys109, and Cys102–Cys114. The propeptide occupies 118 to 124; sequence GLPSLAA.

The protein belongs to the cyclotide family. Moebius subfamily. In terms of processing, kalata-B1 is a cyclic peptide which occurs in three forms: with unmodified Trp-111, with Trp-111 oxidized to form oxindolylalanine and with Trp-111 oxidized to form N-formylkynurenine. Oxidation is enhanced by exposure to sunlight. In terms of tissue distribution, leaves and stems. Lower in roots.

Functionally, probably participates in a plant defense mechanism. Has antibiotic activity. Has a diuretic effect. Has a uterotonic effect in humans. Active against the Gram-positive S.aureus with a minimum inhibition concentration of approximately 0.2 microM. Relatively ineffective against Gram-negative bacteria such as E.coli and P.aeruginosa. Inhibitory effect on the growth and development of larvae from H.punctigera. The unmodified form has hemolytic activity, the oxidized form lacks hemolytic activity. If the protein is linearized, hemolytic activity is lost. This Oldenlandia affinis protein is Kalata-B1 (OAK1).